The following is a 711-amino-acid chain: Triacylglycerol hydrolase DDHD2 (711 aa).

The segment at 1–24 (MSSVQSQQEQLSQSDPSPSPNSCS) is disordered. In terms of domain architecture, WWE spans 30-112 (DMDAGSLYEP…WDELASEVRR (83 aa)). The Nucleophile role is filled by S351. In terms of domain architecture, SAM spans 385–448 (GDTPTLEEDL…NYFSTRKNSM (64 aa)). S447 is subject to Phosphoserine. Disordered regions lie at residues 449–470 (GIKRPAPQPASGANIPKESEFC) and 609–638 (LQASETPEETEAEPESTSEKPSDVNTEETS). One can recognise a DDHD domain in the interval 495 to 700 (LIYKPEIFFA…VLLVLKEIYQ (206 aa)). Acidic residues predominate over residues 614-624 (TPEETEAEPES).

It belongs to the PA-PLA1 family. In terms of assembly, forms homooligomers and, to a much smaller extent, heterooligomers with DDHD1. Widely expressed (at protein level).

The protein localises to the cytoplasm. It localises to the cytosol. It is found in the endoplasmic reticulum-Golgi intermediate compartment. Its subcellular location is the golgi apparatus. The protein resides in the cis-Golgi network. It catalyses the reaction a triacylglycerol + H2O = a diacylglycerol + a fatty acid + H(+). It carries out the reaction a diacylglycerol + H2O = a monoacylglycerol + a fatty acid + H(+). The enzyme catalyses a 1,3-diacylglycerol + H2O = a 1-acylglycerol + a fatty acid + H(+). The catalysed reaction is a 1-acylglycerol + H2O = glycerol + a fatty acid + H(+). It catalyses the reaction 1,2,3-tri-(9Z-octadecenoyl)-glycerol + H2O = di-(9Z)-octadecenoylglycerol + (9Z)-octadecenoate + H(+). It carries out the reaction di-(9Z)-octadecenoylglycerol + H2O = (9Z-octadecenoyl)-glycerol + (9Z)-octadecenoate + H(+). The enzyme catalyses 1,3-di-(9Z-octadecenoyl)-glycerol + H2O = 1-(9Z-octadecenoyl)-glycerol + (9Z)-octadecenoate + H(+). The catalysed reaction is trihexadecanoylglycerol + H2O = dihexadecanoylglycerol + hexadecanoate + H(+). It catalyses the reaction 1,2-di-(9Z-octadecenoyl)-sn-glycero-3-phosphocholine + H2O = (9Z-octadecenoyl)-sn-glycero-3-phosphocholine + (9Z)-octadecenoate + H(+). It carries out the reaction 1-(9Z-octadecenoyl)-glycerol + H2O = glycerol + (9Z)-octadecenoate + H(+). The enzyme catalyses 1,2-di-(9Z-octadecenoyl)-sn-glycero-3-phosphate + H2O = 2-(9Z-octadecenoyl)-sn-glycero-3-phosphate + (9Z)-octadecenoate + H(+). The catalysed reaction is 1-hexadecanoyl-2-(9Z-octadecenoyl)-sn-glycero-3-phosphate + H2O = 2-(9Z-octadecenoyl)-sn-glycero-3-phosphate + hexadecanoate + H(+). It catalyses the reaction 1-hexadecanoyl-2-(9Z-octadecenoyl)-sn-glycero-3-phosphoethanolamine + H2O = 2-(9Z-octadecenoyl)-sn-glycero-3-phosphoethanolamine + hexadecanoate + H(+). It carries out the reaction 1-hexadecanoyl-2-(9Z-octadecenoyl)-sn-glycero-3-phospho-L-serine + H2O = 2-(9Z-octadecenoyl)-sn-glycero-3-phospho-L-serine + hexadecanoate + H(+). The enzyme catalyses 1-hexadecanoyl-2-(9Z-octadecenoyl)-sn-glycero-3-phosphocholine + H2O = 2-(9Z-octadecenoyl)-sn-glycero-3-phosphocholine + hexadecanoate + H(+). In terms of biological role, diacylglycerol (DAG) and triacylglycerol (TAG) lipase required for proper lipid homeostasis in the central nervous system. It cooperates with PNPLA2/ATGL in neuronal TAG catabolism and hydrolyzes sn-1,3 DAG downstream of PNPLA2/ATGL. In vitro, it also acts as a phospholipase that hydrolyzes preferentially phosphatidic acids, including 1,2-dioleoyl-sn-phosphatidic acid, phosphatidylcholine and phosphatidylethanolamine. Specifically binds to phosphatidylinositol 3-phosphate (PI(3)P), phosphatidylinositol 4-phosphate (PI(4)P), phosphatidylinositol 5-phosphate (PI(5)P) and possibly phosphatidylinositol 4,5-bisphosphate (PI(4,5)P2). May be involved in the maintenance of the endoplasmic reticulum and/or Golgi structures. May regulate the transport between Golgi apparatus and plasma membrane. The sequence is that of Triacylglycerol hydrolase DDHD2 from Homo sapiens (Human).